A 549-amino-acid chain; its full sequence is Arginine--tRNA ligase (549 aa).

Positions 132-142 (ANPTGPLHLAH) match the 'HIGH' region motif.

The protein belongs to the class-I aminoacyl-tRNA synthetase family. As to quaternary structure, monomer.

The protein localises to the cytoplasm. It carries out the reaction tRNA(Arg) + L-arginine + ATP = L-arginyl-tRNA(Arg) + AMP + diphosphate. The polypeptide is Arginine--tRNA ligase (Renibacterium salmoninarum (strain ATCC 33209 / DSM 20767 / JCM 11484 / NBRC 15589 / NCIMB 2235)).